A 383-amino-acid polypeptide reads, in one-letter code: Ribosomal RNA large subunit methyltransferase G (383 aa).

The protein belongs to the methyltransferase superfamily. RlmG family.

It localises to the cytoplasm. The catalysed reaction is guanosine(1835) in 23S rRNA + S-adenosyl-L-methionine = N(2)-methylguanosine(1835) in 23S rRNA + S-adenosyl-L-homocysteine + H(+). Specifically methylates the guanine in position 1835 (m2G1835) of 23S rRNA. This Vibrio atlanticus (strain LGP32) (Vibrio splendidus (strain Mel32)) protein is Ribosomal RNA large subunit methyltransferase G.